Here is a 279-residue protein sequence, read N- to C-terminus: Zinc-finger homeodomain protein 1 (279 aa).

Positions 1 to 13 are enriched in acidic residues; the sequence is MDFDDHDDGDEEM. The tract at residues 1 to 47 is disordered; that stretch reads MDFDDHDDGDEEMPPMPVSSSYETPPQHGLAGGGMAPKPPGEIGSRV. The segment at 57-106 adopts a ZF-HD dimerization-type; degenerate zinc-finger fold; sequence YRECLKNHAVGIGGHAVDGCGEFMAAGEEGTIDALRCAACNCHRNFHRKE. Residues 168–190 form a disordered region; sequence RPLALPSTSHSGRDDGDDLSGMV. The homeobox DNA-binding region spans 215–278; that stretch reads KKRFRTKFTQ…NNKHTLGKKL (64 aa).

As to quaternary structure, homo- and heterodimer with other ZFHD proteins.

Its subcellular location is the nucleus. In terms of biological role, putative transcription factor. This Oryza sativa subsp. japonica (Rice) protein is Zinc-finger homeodomain protein 1 (ZHD1).